The sequence spans 239 residues: Peptidyl-tRNA hydrolase (239 aa).

Y14 provides a ligand contact to tRNA. Residue H19 is the Proton acceptor of the active site. Positions 64, 66, and 112 each coordinate tRNA. Positions 186–239 (RTAPPRPSTGTGRPPAKTPARAEEPPAPAASPAPATAPLPDARSPLQKLVDRFK) are disordered. The segment covering 193–204 (STGTGRPPAKTP) has biased composition (low complexity). Residues 210 to 222 (PPAPAASPAPATA) show a composition bias toward pro residues.

Belongs to the PTH family. As to quaternary structure, monomer.

It is found in the cytoplasm. It carries out the reaction an N-acyl-L-alpha-aminoacyl-tRNA + H2O = an N-acyl-L-amino acid + a tRNA + H(+). In terms of biological role, hydrolyzes ribosome-free peptidyl-tRNAs (with 1 or more amino acids incorporated), which drop off the ribosome during protein synthesis, or as a result of ribosome stalling. Its function is as follows. Catalyzes the release of premature peptidyl moieties from peptidyl-tRNA molecules trapped in stalled 50S ribosomal subunits, and thus maintains levels of free tRNAs and 50S ribosomes. In Ruegeria pomeroyi (strain ATCC 700808 / DSM 15171 / DSS-3) (Silicibacter pomeroyi), this protein is Peptidyl-tRNA hydrolase.